A 251-amino-acid chain; its full sequence is Cathelicidin-B1 (251 aa).

Residues 1–20 form the signal peptide; it reads MGRMWASEVLLLLLLGSSRA. Positions 21-211 are excised as a propeptide; sequence VTPGLDVSTA…ELRCRPLRPQ (191 aa). The tract at residues 29–109 is disordered; it reads TAPGLDGSIP…TITPKQDGSI (81 aa). 2 disulfide bridges follow: Cys-172-Cys-181 and Cys-189-Cys-205.

This sequence belongs to the cathelicidin family. As to expression, detected in bursa of Fabricius, in filamentous structures surrounding the basal and lateral surfaces of bursal M cells (at protein level). Detected in bursa of Fabricius, in secretory enterocytes of the interfollicular bursal epithelium, but not in M cells.

The protein resides in the secreted. Has potent antimicrobial activity against Gram-positive and Gram-negative bacteria (in vitro). May play a role in the innate immune response. This Gallus gallus (Chicken) protein is Cathelicidin-B1 (CATHB1).